Consider the following 163-residue polypeptide: Cyanate hydratase (163 aa).

Active-site residues include arginine 103, glutamate 106, and serine 129.

It belongs to the cyanase family.

The catalysed reaction is cyanate + hydrogencarbonate + 3 H(+) = NH4(+) + 2 CO2. In terms of biological role, catalyzes the reaction of cyanate with bicarbonate to produce ammonia and carbon dioxide. The protein is Cyanate hydratase of Ajellomyces dermatitidis (strain ER-3 / ATCC MYA-2586) (Blastomyces dermatitidis).